A 168-amino-acid polypeptide reads, in one-letter code: Lipoprotein signal peptidase (168 aa).

3 helical membrane passes run 8-28 (LYYL…WLVV), 61-81 (GQFW…VIYI), and 91-111 (FGIA…DRIF). Active-site residues include aspartate 117 and aspartate 135. A helical membrane pass occupies residues 128–148 (FPIFNVADAALTIGVALMFIY).

Belongs to the peptidase A8 family.

It localises to the cell membrane. The catalysed reaction is Release of signal peptides from bacterial membrane prolipoproteins. Hydrolyzes -Xaa-Yaa-Zaa-|-(S,diacylglyceryl)Cys-, in which Xaa is hydrophobic (preferably Leu), and Yaa (Ala or Ser) and Zaa (Gly or Ala) have small, neutral side chains.. It participates in protein modification; lipoprotein biosynthesis (signal peptide cleavage). Its function is as follows. This protein specifically catalyzes the removal of signal peptides from prolipoproteins. This chain is Lipoprotein signal peptidase, found in Anoxybacillus flavithermus (strain DSM 21510 / WK1).